A 336-amino-acid chain; its full sequence is D-aspartate oxidase (336 aa).

FAD contacts are provided by E34, K35, T41, S42, G304, V308, and S309. The short motif at 334–336 (SKL) is the Microbody targeting signal element.

This sequence belongs to the DAMOX/DASOX family. In terms of assembly, monomer. The cofactor is FAD.

It is found in the peroxisome matrix. It carries out the reaction D-aspartate + O2 + H2O = oxaloacetate + H2O2 + NH4(+). It catalyses the reaction D-glutamate + O2 + H2O = H2O2 + 2-oxoglutarate + NH4(+). Functionally, selectively catalyzes the oxidative deamination of acidic amino acids. Suppresses the level of D-aspartate in the brain, an amino acid that can act as an agonist for glutamate receptors. Protects the organism from the toxicity of D-amino acids. May also function in the intestine. The protein is D-aspartate oxidase of Octopus vulgaris (Common octopus).